Reading from the N-terminus, the 288-residue chain is Phenazine biosynthesis-like domain-containing protein 2 (288 aa).

The active site involves Glu46.

This sequence belongs to the PhzF family.

This Mus musculus (Mouse) protein is Phenazine biosynthesis-like domain-containing protein 2 (Pbld2).